A 375-amino-acid chain; its full sequence is Chaperone protein DnaJ (375 aa).

One can recognise a J domain in the interval 5–70 (DFYETLGVAK…QKRAAYDRYG (66 aa)). The CR-type zinc-finger motif lies at 136 to 214 (GKTAQIRVPT…CHGQGRVTEE (79 aa)). Zn(2+) is bound by residues Cys149, Cys152, Cys166, Cys169, Cys188, Cys191, Cys202, and Cys205. CXXCXGXG motif repeat units follow at residues 149–156 (CDVCSGSG), 166–173 (CGTCQGTG), 188–195 (CPTCHGRG), and 202–209 (CPKCHGQG).

It belongs to the DnaJ family. As to quaternary structure, homodimer. Zn(2+) serves as cofactor.

It is found in the cytoplasm. Participates actively in the response to hyperosmotic and heat shock by preventing the aggregation of stress-denatured proteins and by disaggregating proteins, also in an autonomous, DnaK-independent fashion. Unfolded proteins bind initially to DnaJ; upon interaction with the DnaJ-bound protein, DnaK hydrolyzes its bound ATP, resulting in the formation of a stable complex. GrpE releases ADP from DnaK; ATP binding to DnaK triggers the release of the substrate protein, thus completing the reaction cycle. Several rounds of ATP-dependent interactions between DnaJ, DnaK and GrpE are required for fully efficient folding. Also involved, together with DnaK and GrpE, in the DNA replication of plasmids through activation of initiation proteins. This Rhizobium etli (strain ATCC 51251 / DSM 11541 / JCM 21823 / NBRC 15573 / CFN 42) protein is Chaperone protein DnaJ.